The sequence spans 103 residues: Large ribosomal subunit protein bL21 (103 aa).

The protein belongs to the bacterial ribosomal protein bL21 family. Part of the 50S ribosomal subunit. Contacts protein L20.

In terms of biological role, this protein binds to 23S rRNA in the presence of protein L20. This Paraburkholderia phymatum (strain DSM 17167 / CIP 108236 / LMG 21445 / STM815) (Burkholderia phymatum) protein is Large ribosomal subunit protein bL21.